The following is a 451-amino-acid chain: uncharacterized protein (451 aa).

A signal peptide spans 1–18; that stretch reads MRTRITLALAVLLLLLAG. A lipid anchor (N-palmitoyl cysteine) is attached at Cys-19. The S-diacylglycerol cysteine moiety is linked to residue Cys-19. Residues 424 to 451 form a disordered region; the sequence is TSADPPPGVPRAGKRNIRDATSRLPSTP.

It is found in the cell membrane. Its function is as follows. May participate in oleandomycin glycosylation and secretion during antibiotic production. This is an uncharacterized protein from Streptomyces antibioticus.